We begin with the raw amino-acid sequence, 190 residues long: Thioredoxin F-type, chloroplastic (190 aa).

Residues 1 to 31 (MALHLSLSHQSWTSPAHPITSSDPTRSSVPG) are disordered. The N-terminal 77 residues, 1 to 77 (MALHLSLSHQ…SMEQALGTQE (77 aa)), are a transit peptide targeting the chloroplast. A compositionally biased stretch (polar residues) spans 7–30 (LSHQSWTSPAHPITSSDPTRSSVP). One can recognise a Thioredoxin domain in the interval 78–189 (MEAIVGKVTE…LLEAIQAARS (112 aa)). Catalysis depends on nucleophile residues Cys114 and Cys117. A disulfide bond links Cys114 and Cys117.

The protein belongs to the thioredoxin family. Plant F-type subfamily. As to quaternary structure, forms a complex with heterodimeric ferredoxin-thioredoxin reductase (FTR) and ferredoxin.

It localises to the plastid. Its subcellular location is the chloroplast. In terms of biological role, participates in various redox reactions through the reversible oxidation of the active center dithiol to a disulfide. The F form is known to activate a number of enzymes of the photosynthetic carbon cycle. The protein is Thioredoxin F-type, chloroplastic of Spinacia oleracea (Spinach).